Consider the following 92-residue polypeptide: MKMKKTNIKMHVKRGETVQIISGREKGKIGKIIKVLPKSSQVIIDNLNIATKHLKAQKEGDSGQIIRIEKPIHSSNVIQYKLDSNTSIKDRV.

Belongs to the universal ribosomal protein uL24 family. Part of the 50S ribosomal subunit.

The protein resides in the plastid. Its subcellular location is the chloroplast. One of two assembly initiator proteins, it binds directly to the 5'-end of the 23S rRNA, where it nucleates assembly of the 50S subunit. The protein is Large ribosomal subunit protein uL24c (rpl24) of Gracilaria tenuistipitata var. liui (Red alga).